A 149-amino-acid polypeptide reads, in one-letter code: Histone H2A (149 aa).

A compositionally biased stretch (basic residues) spans 1–23 (METAGKAKKGFGGRKGGPRKKSV). Disordered stretches follow at residues 1–25 (METAGKAKKGFGGRKGGPRKKSVTR) and 127–149 (KTAEKAAKEPKSPSKAGKSPKKA). The segment covering 127 to 138 (KTAEKAAKEPKS) has biased composition (basic and acidic residues). 2 consecutive short sequence motifs (SPKK motif) follow at residues 138-141 (SPSK) and 145-148 (SPKK).

It belongs to the histone H2A family. The nucleosome is a histone octamer containing two molecules each of H2A, H2B, H3 and H4 assembled in one H3-H4 heterotetramer and two H2A-H2B heterodimers. The octamer wraps approximately 147 bp of DNA.

It localises to the nucleus. It is found in the chromosome. Core component of nucleosome. Nucleosomes wrap and compact DNA into chromatin, limiting DNA accessibility to the cellular machineries which require DNA as a template. Histones thereby play a central role in transcription regulation, DNA repair, DNA replication and chromosomal stability. DNA accessibility is regulated via a complex set of post-translational modifications of histones, also called histone code, and nucleosome remodeling. The protein is Histone H2A of Petroselinum crispum (Parsley).